We begin with the raw amino-acid sequence, 148 residues long: Cdc42 effector protein 5 (148 aa).

Disordered regions lie at residues 1–89 (MPVL…DPLL) and 111–148 (RPEA…VIGL). Residues 23 to 37 (ISAPLGDFRHTLHVG) form the CRIB domain. Arginine 38 is subject to Omega-N-methylarginine. Over residues 55-76 (GPPPEPRAPPAGAPRSPPPPAV) the composition is skewed to pro residues. Positions 77 to 87 (PQSAAPSPADP) are enriched in low complexity.

Belongs to the BORG/CEP family. Interacts with CDC42, in a GTP-dependent manner, and with SEPT7.

It is found in the endomembrane system. It localises to the cytoplasm. The protein localises to the cytoskeleton. Probably involved in the organization of the actin cytoskeleton. May act downstream of CDC42 to induce actin filament assembly leading to cell shape changes. Induces pseudopodia formation in fibroblasts. Inhibits MAPK8 independently of CDC42 binding. Controls septin organization and this effect is negatively regulated by CDC42. The sequence is that of Cdc42 effector protein 5 (CDC42EP5) from Homo sapiens (Human).